A 278-amino-acid chain; its full sequence is Thiazole synthase (278 aa).

Lys-109 functions as the Schiff-base intermediate with DXP in the catalytic mechanism. Residues Gly-170, 197–198 (AG), and 219–220 (NT) contribute to the 1-deoxy-D-xylulose 5-phosphate site.

Belongs to the ThiG family. As to quaternary structure, homotetramer. Forms heterodimers with either ThiH or ThiS.

It localises to the cytoplasm. The enzyme catalyses [ThiS sulfur-carrier protein]-C-terminal-Gly-aminoethanethioate + 2-iminoacetate + 1-deoxy-D-xylulose 5-phosphate = [ThiS sulfur-carrier protein]-C-terminal Gly-Gly + 2-[(2R,5Z)-2-carboxy-4-methylthiazol-5(2H)-ylidene]ethyl phosphate + 2 H2O + H(+). Its pathway is cofactor biosynthesis; thiamine diphosphate biosynthesis. Its function is as follows. Catalyzes the rearrangement of 1-deoxy-D-xylulose 5-phosphate (DXP) to produce the thiazole phosphate moiety of thiamine. Sulfur is provided by the thiocarboxylate moiety of the carrier protein ThiS. In vitro, sulfur can be provided by H(2)S. This chain is Thiazole synthase, found in Cupriavidus pinatubonensis (strain JMP 134 / LMG 1197) (Cupriavidus necator (strain JMP 134)).